Consider the following 111-residue polypeptide: Microtubule nucleation factor SSNA1 (111 aa).

Positions 6–71 (QALQNHNNEL…ARKTETKNEY (66 aa)) form a coiled coil.

Belongs to the SSNA1 family. In terms of assembly, self-assembles into fibrils in a head-to-tail fashion.

The protein resides in the cytoplasm. The protein localises to the cytoskeleton. It is found in the flagellum basal body. Its subcellular location is the flagellum axoneme. Its function is as follows. Microtubule-binding protein which stabilizes dynamic microtubules by slowing growth and shrinkage at both plus and minus ends and serves as a sensor of microtubule damage. Induces microtubule branching which is mediated by the formation of long SSNA1 fibrils which guide microtubule protofilaments to split apart from the mother microtubule and form daughter microtubules. Required for cell division. In Chlamydomonas reinhardtii (Chlamydomonas smithii), this protein is Microtubule nucleation factor SSNA1.